The chain runs to 483 residues: Probable ATP-dependent RNA helicase DDX49 (483 aa).

Residues 2-30 (AGFAELGLSSWLVEQCRQLGLKQPTPVQL) carry the Q motif motif. Residues 33–207 (IPAILEGRDC…GLATNQPFFW (175 aa)) enclose the Helicase ATP-binding domain. Residue 46–53 (AKTGSGKT) coordinates ATP. Positions 152–155 (DEAD) match the DEAD box motif. The 165-residue stretch at 218–382 (QLDQRYLLVP…EFSVEEAEVL (165 aa)) folds into the Helicase C-terminal domain. The segment at 444–483 (KEKVEETLKRQKAGRAGHKGRPPRTPSGSHSGPVPSQGLV) is disordered. The span at 453–465 (RQKAGRAGHKGRP) shows a compositional bias: basic residues.

The protein belongs to the DEAD box helicase family. DDX49/DBP8 subfamily.

It localises to the nucleus. Its subcellular location is the nucleolus. It catalyses the reaction ATP + H2O = ADP + phosphate + H(+). ATP-dependent RNA helicase that plays a role in various aspects of RNA metabolism including the regulation of mRNA export and the levels of pre-ribosomal RNA. Regulates the stability and synthesis of pre-ribosomal RNA and thereby regulates cell proliferation. Also possesses antiviral activity by recognizing gammaherpesvirus transcripts in the context of lytic reactivation. The chain is Probable ATP-dependent RNA helicase DDX49 (DDX49) from Homo sapiens (Human).